The following is a 383-amino-acid chain: Lipid-A-disaccharide synthase (383 aa).

The protein belongs to the LpxB family.

The catalysed reaction is a lipid X + a UDP-2-N,3-O-bis[(3R)-3-hydroxyacyl]-alpha-D-glucosamine = a lipid A disaccharide + UDP + H(+). It functions in the pathway bacterial outer membrane biogenesis; LPS lipid A biosynthesis. Its function is as follows. Condensation of UDP-2,3-diacylglucosamine and 2,3-diacylglucosamine-1-phosphate to form lipid A disaccharide, a precursor of lipid A, a phosphorylated glycolipid that anchors the lipopolysaccharide to the outer membrane of the cell. This is Lipid-A-disaccharide synthase from Aliivibrio fischeri (strain MJ11) (Vibrio fischeri).